Here is a 396-residue protein sequence, read N- to C-terminus: Ribosomal RNA large subunit methyltransferase I (396 aa).

One can recognise a PUA domain in the interval 2-81 (SVRLVLAKGR…ESIDIAFFTR (80 aa)).

It belongs to the methyltransferase superfamily. RlmI family.

The protein resides in the cytoplasm. It carries out the reaction cytidine(1962) in 23S rRNA + S-adenosyl-L-methionine = 5-methylcytidine(1962) in 23S rRNA + S-adenosyl-L-homocysteine + H(+). Its function is as follows. Specifically methylates the cytosine at position 1962 (m5C1962) of 23S rRNA. The protein is Ribosomal RNA large subunit methyltransferase I of Escherichia coli (strain UTI89 / UPEC).